We begin with the raw amino-acid sequence, 145 residues long: D-aminoacyl-tRNA deacylase (145 aa).

The short motif at 137 to 138 (GP) is the Gly-cisPro motif, important for rejection of L-amino acids element.

This sequence belongs to the DTD family. In terms of assembly, homodimer.

It is found in the cytoplasm. It carries out the reaction glycyl-tRNA(Ala) + H2O = tRNA(Ala) + glycine + H(+). The enzyme catalyses a D-aminoacyl-tRNA + H2O = a tRNA + a D-alpha-amino acid + H(+). In terms of biological role, an aminoacyl-tRNA editing enzyme that deacylates mischarged D-aminoacyl-tRNAs. Also deacylates mischarged glycyl-tRNA(Ala), protecting cells against glycine mischarging by AlaRS. Acts via tRNA-based rather than protein-based catalysis; rejects L-amino acids rather than detecting D-amino acids in the active site. By recycling D-aminoacyl-tRNA to D-amino acids and free tRNA molecules, this enzyme counteracts the toxicity associated with the formation of D-aminoacyl-tRNA entities in vivo and helps enforce protein L-homochirality. The polypeptide is D-aminoacyl-tRNA deacylase (Limosilactobacillus fermentum (strain NBRC 3956 / LMG 18251) (Lactobacillus fermentum)).